Reading from the N-terminus, the 329-residue chain is tRNA-modifying protein YgfZ (329 aa).

Folate-binding residues include Trp28 and Trp188.

The protein belongs to the tRNA-modifying YgfZ family.

The protein resides in the cytoplasm. In terms of biological role, folate-binding protein involved in regulating the level of ATP-DnaA and in the modification of some tRNAs. It is probably a key factor in regulatory networks that act via tRNA modification, such as initiation of chromosomal replication. This is tRNA-modifying protein YgfZ from Photorhabdus laumondii subsp. laumondii (strain DSM 15139 / CIP 105565 / TT01) (Photorhabdus luminescens subsp. laumondii).